The chain runs to 72 residues: Metallothionein-like protein type 2 A (72 aa).

The protein belongs to the metallothionein superfamily. Type 15 family. As to expression, leaves and roots.

Functionally, metallothioneins have a high content of cysteine residues that bind various heavy metals. This chain is Metallothionein-like protein type 2 A (MTA), found in Solanum lycopersicum (Tomato).